The following is a 185-amino-acid chain: Transmembrane protein 252 (185 aa).

A run of 2 helical transmembrane segments spans residues 8 to 28 (VLCA…GFFI) and 39 to 59 (LVVA…GIFW). The segment at 125–149 (YTETSLEPQDKDKNDPQPEAPPPYP) is disordered.

It localises to the membrane. This chain is Transmembrane protein 252 (Tmem252), found in Rattus norvegicus (Rat).